The following is a 331-amino-acid chain: Mitochondrial glycine transporter (331 aa).

3 Solcar repeats span residues 19-103 (SRTT…LRQG), 132-216 (LSNW…LKRR), and 234-318 (SSSS…LILR). Helical transmembrane passes span 25 to 50 (FAAGLCSGLTSSILLQPADLLKTRVQ), 78 to 104 (GTLPSALRTGFGSALYFTSLNALRQGL), 138 to 163 (LATGAVARTAAGFVMMPVTVLKVRYE), 191 to 214 (GFGATAARDAPYAGLYVLFYEQLK), 238 to 264 (INFVSGGLAAGLATAITNPFDAVKTRL), and 293 to 311 (GLGLRITRKALSSALAWTV).

This sequence belongs to the mitochondrial carrier (TC 2.A.29) family. SLC25A38 subfamily.

Its subcellular location is the mitochondrion inner membrane. The catalysed reaction is glycine(in) = glycine(out). Mitochondrial glycine transporter that imports glycine into the mitochondrial matrix. Plays an important role in providing glycine for the first enzymatic step in heme biosynthesis, the condensation of glycine with succinyl-CoA to produce 5-aminolevulinate (ALA) in the mitochondrial matrix. The sequence is that of Mitochondrial glycine transporter from Neosartorya fischeri (strain ATCC 1020 / DSM 3700 / CBS 544.65 / FGSC A1164 / JCM 1740 / NRRL 181 / WB 181) (Aspergillus fischerianus).